A 78-amino-acid polypeptide reads, in one-letter code: Acyl carrier protein (78 aa).

A Carrier domain is found at 2-77; the sequence is SNIEERVKKI…AAIDYVTSNA (76 aa). Serine 37 carries the O-(pantetheine 4'-phosphoryl)serine modification.

This sequence belongs to the acyl carrier protein (ACP) family. 4'-phosphopantetheine is transferred from CoA to a specific serine of apo-ACP by AcpS. This modification is essential for activity because fatty acids are bound in thioester linkage to the sulfhydryl of the prosthetic group.

Its subcellular location is the cytoplasm. It participates in lipid metabolism; fatty acid biosynthesis. Its function is as follows. Carrier of the growing fatty acid chain in fatty acid biosynthesis. This Vibrio cholerae serotype O1 (strain ATCC 39315 / El Tor Inaba N16961) protein is Acyl carrier protein.